A 146-amino-acid chain; its full sequence is NADH-quinone oxidoreductase subunit A (146 aa).

The next 3 helical transmembrane spans lie at 14–34 (FGLF…GGFL), 68–88 (LVAM…AWAV), and 96–116 (IGFI…IYLV).

It belongs to the complex I subunit 3 family. NDH-1 is composed of 13 different subunits. Subunits NuoA, H, J, K, L, M, N constitute the membrane sector of the complex.

It localises to the cell inner membrane. It carries out the reaction a quinone + NADH + 5 H(+)(in) = a quinol + NAD(+) + 4 H(+)(out). NDH-1 shuttles electrons from NADH, via FMN and iron-sulfur (Fe-S) centers, to quinones in the respiratory chain. The immediate electron acceptor for the enzyme in this species is believed to be ubiquinone. Couples the redox reaction to proton translocation (for every two electrons transferred, four hydrogen ions are translocated across the cytoplasmic membrane), and thus conserves the redox energy in a proton gradient. In Pectobacterium carotovorum subsp. carotovorum (Erwinia carotovora subsp. carotovora), this protein is NADH-quinone oxidoreductase subunit A.